The following is a 214-amino-acid chain: A-type ATP synthase subunit D (214 aa).

This sequence belongs to the V-ATPase D subunit family. In terms of assembly, has multiple subunits with at least A(3), B(3), C, D, E, F, H, I and proteolipid K(x).

The protein localises to the cell membrane. In terms of biological role, component of the A-type ATP synthase that produces ATP from ADP in the presence of a proton gradient across the membrane. The polypeptide is A-type ATP synthase subunit D (Pyrococcus horikoshii (strain ATCC 700860 / DSM 12428 / JCM 9974 / NBRC 100139 / OT-3)).